The primary structure comprises 1241 residues: RNA polymerase II C-terminal domain phosphatase-like 3 (1241 aa).

Disordered regions lie at residues Asp-361–Gly-402, Val-428–Tyr-470, Ile-505–Arg-525, Lys-578–Asp-598, Ala-677–Pro-702, Val-720–Thr-800, and Thr-852–Arg-885. Over residues Pro-368–Leu-378 the composition is skewed to polar residues. Residues Gly-441–Ser-466 show a composition bias toward low complexity. The segment covering Ala-677–Arg-686 has biased composition (basic and acidic residues). Composition is skewed to polar residues over residues Pro-691–Pro-702 and Pro-791–Thr-800. A compositionally biased stretch (low complexity) spans Ser-871–Ala-881. The 181-residue stretch at Phe-923 to Leu-1103 folds into the FCP1 homology domain. The BRCT domain occupies Glu-1146–Ile-1239.

Interacts with RAP74. Requires Mg(2+) as cofactor. The cofactor is Co(2+). Mn(2+) is required as a cofactor.

It localises to the nucleus. The enzyme catalyses O-phospho-L-seryl-[protein] + H2O = L-seryl-[protein] + phosphate. The catalysed reaction is O-phospho-L-threonyl-[protein] + H2O = L-threonyl-[protein] + phosphate. Functionally, completely dephosphorylates 'Ser-2', and partially 'Ser-5' and 'Ser-7' of the heptad repeats YSPTSPS in the C-terminal domain (CTD) of the largest RNA polymerase II subunit (RPB1). Involved in defense response. Acts as a negative regulator of immune gene expression and immunity to pathogen infections. Preferentially dephosphorylates 'Ser-2' of RNA polymerase II CTD. This counterregulates the MAP kinase (MAPK) or cyclin-dependent kinase C (CDKC)-mediated phosphorylation of CTD in response to pathogens and upon perception of microbe-associated molecular patterns (MAMPs). MAPKs phosphorylate and activate CDKCs, which are CTD kinases that positively regulate plant innate immunity. Acts as a negative regulator of stress gene transcription involved in abscisic acid (ABA) mediated signaling pathway and cold resistance. Acts as a post-transcriptional gene silencing (PTGS) suppressor. This chain is RNA polymerase II C-terminal domain phosphatase-like 3, found in Arabidopsis thaliana (Mouse-ear cress).